Reading from the N-terminus, the 364-residue chain is Aminomethyltransferase (364 aa).

The protein belongs to the GcvT family. In terms of assembly, the glycine cleavage system is composed of four proteins: P, T, L and H.

It catalyses the reaction N(6)-[(R)-S(8)-aminomethyldihydrolipoyl]-L-lysyl-[protein] + (6S)-5,6,7,8-tetrahydrofolate = N(6)-[(R)-dihydrolipoyl]-L-lysyl-[protein] + (6R)-5,10-methylene-5,6,7,8-tetrahydrofolate + NH4(+). The glycine cleavage system catalyzes the degradation of glycine. In Bacillus licheniformis (strain ATCC 14580 / DSM 13 / JCM 2505 / CCUG 7422 / NBRC 12200 / NCIMB 9375 / NCTC 10341 / NRRL NRS-1264 / Gibson 46), this protein is Aminomethyltransferase.